The following is a 481-amino-acid chain: Proton-coupled amino acid transporter 2 (481 aa).

Topologically, residues 1-56 (MSVTKSAGSPQVAATVKLDLVSFPESAKKVQSQDPNPVNGSSSESSEKTKGITGFQ) are cytoplasmic. A disordered region spans residues 26-49 (SAKKVQSQDPNPVNGSSSESSEKT). Positions 29-40 (KVQSQDPNPVNG) are enriched in polar residues. Residues 57 to 77 (TLVHLVKGNMGTGILGLPLAV) traverse the membrane as a helical segment. At 78-79 (KN) the chain is on the extracellular side. A helical transmembrane segment spans residues 80–100 (AGILMGPLSLLVMGLIACHCM). Residues 101 to 146 (HILVRCAQRFCHRLNKPFMDYGDTVMHGLASSPNTWLQSHAHWGRH) lie on the Cytoplasmic side of the membrane. Residues 147-167 (AVSFFLIVTQLGFCCVYIVFL) form a helical membrane-spanning segment. At 168-195 (ADNLKQVVEAVNSTTISCHKNETVVLTP) the chain is on the extracellular side. Residues 196-216 (TIDSRLYMLAFLPVLGLLVFI) traverse the membrane as a helical segment. Residues 217 to 220 (RNLR) are Cytoplasmic-facing. Residues 221 to 241 (VLTIFSLLANVSMLVSLVIIG) form a helical membrane-spanning segment. The Extracellular portion of the chain corresponds to 242–262 (QYIIQGIPDPSQLPLVASWKT). A helical transmembrane segment spans residues 263 to 283 (YPLFFGTAIFSFESIGVVLPL). At 284–295 (ENKMKDARRFPT) the chain is on the cytoplasmic side. Residues 296–316 (ILSLGMSIITTLYIAIGALGY) traverse the membrane as a helical segment. Residues 317–343 (LRFGDDIKASITLNLPNCWLYQSVKLL) lie on the Extracellular side of the membrane. Residues 344–364 (YVVGILCTHALQFYVPAEIII) form a helical membrane-spanning segment. Residues 365 to 377 (PLAVSQVSKRWAL) are Cytoplasmic-facing. The chain crosses the membrane as a helical span at residues 378–398 (PVDLSIRLALVCVTCMLAILI). Residues 399-402 (PRLD) are Extracellular-facing. A helical transmembrane segment spans residues 403-423 (LVLSLVGSVSSSALALIIPPL). Topologically, residues 424-444 (LEVTTYYGEGMSPLTITKDAL) are cytoplasmic. A helical transmembrane segment spans residues 445–465 (ISILGFMGFVVGTYQALDELI). The Extracellular segment spans residues 466–481 (RSGNSLPLSNSTMFIQ).

Belongs to the amino acid/polyamine transporter 2 family. In terms of tissue distribution, expressed in lung and spleen, and to a lower extent in brain, heart, kidney and skeletal muscle.

It localises to the cell membrane. The protein localises to the endoplasmic reticulum membrane. The protein resides in the recycling endosome membrane. It carries out the reaction glycine(in) + H(+)(in) = glycine(out) + H(+)(out). The catalysed reaction is L-alanine(in) + H(+)(in) = L-alanine(out) + H(+)(out). It catalyses the reaction D-alanine(in) + H(+)(in) = D-alanine(out) + H(+)(out). The enzyme catalyses L-proline(out) + H(+)(out) = L-proline(in) + H(+)(in). It carries out the reaction D-proline(out) + H(+)(out) = D-proline(in) + H(+)(in). The catalysed reaction is 4-hydroxy-L-proline(in) + H(+)(in) = 4-hydroxy-L-proline(out) + H(+)(out). It catalyses the reaction L-serine(in) + H(+)(in) = L-serine(out) + H(+)(out). The enzyme catalyses D-serine(out) + H(+)(out) = D-serine(in) + H(+)(in). It carries out the reaction beta-alanine(in) + H(+)(in) = beta-alanine(out) + H(+)(out). The catalysed reaction is 4-aminobutanoate(in) + H(+)(in) = 4-aminobutanoate(out) + H(+)(out). It catalyses the reaction sarcosine(in) + H(+)(in) = sarcosine(out) + H(+)(out). The enzyme catalyses N,N-dimethylglycine(in) + H(+)(in) = N,N-dimethylglycine(out) + H(+)(out). With respect to regulation, inhibited by L- and D-pipecolic acid, nipecotic acid, isonipecotic acid, L- and D-cycloserine, and L-2-azetidine-carboxylate. Its function is as follows. Electrogenic proton/amino acid symporter with a high selectivity for the small side chains amino acids glycine, alanine and proline, where both L- and D-enantiomers are transported. Extension of the backbone length, as in beta-alanine and 4-aminobutanoate or methylation of the amino group, as in sarcosine and N,N-dimethylglycine, are also tolerated but decrease transport efficiency. A free carboxyl group is preferred. The chain is Proton-coupled amino acid transporter 2 from Rattus norvegicus (Rat).